Reading from the N-terminus, the 213-residue chain is Endonuclease III (213 aa).

The HhH domain maps to F108 to N127. Residues C187, C194, C197, and C203 each coordinate [4Fe-4S] cluster.

Belongs to the Nth/MutY family. [4Fe-4S] cluster is required as a cofactor.

The enzyme catalyses 2'-deoxyribonucleotide-(2'-deoxyribose 5'-phosphate)-2'-deoxyribonucleotide-DNA = a 3'-end 2'-deoxyribonucleotide-(2,3-dehydro-2,3-deoxyribose 5'-phosphate)-DNA + a 5'-end 5'-phospho-2'-deoxyribonucleoside-DNA + H(+). Its function is as follows. DNA repair enzyme that has both DNA N-glycosylase activity and AP-lyase activity. The DNA N-glycosylase activity releases various damaged pyrimidines from DNA by cleaving the N-glycosidic bond, leaving an AP (apurinic/apyrimidinic) site. The AP-lyase activity cleaves the phosphodiester bond 3' to the AP site by a beta-elimination, leaving a 3'-terminal unsaturated sugar and a product with a terminal 5'-phosphate. In Rickettsia felis (strain ATCC VR-1525 / URRWXCal2) (Rickettsia azadi), this protein is Endonuclease III.